We begin with the raw amino-acid sequence, 359 residues long: 3-dehydroquinate synthase (359 aa).

NAD(+)-binding positions include 69 to 74 (DGEKYK), 103 to 107 (GVVGD), 127 to 128 (TT), Lys-140, Lys-149, and 167 to 170 (TLDT). Residues Glu-182, His-245, and His-262 each contribute to the Zn(2+) site.

This sequence belongs to the sugar phosphate cyclases superfamily. Dehydroquinate synthase family. It depends on Co(2+) as a cofactor. The cofactor is Zn(2+). NAD(+) is required as a cofactor.

It is found in the cytoplasm. It carries out the reaction 7-phospho-2-dehydro-3-deoxy-D-arabino-heptonate = 3-dehydroquinate + phosphate. It participates in metabolic intermediate biosynthesis; chorismate biosynthesis; chorismate from D-erythrose 4-phosphate and phosphoenolpyruvate: step 2/7. Catalyzes the conversion of 3-deoxy-D-arabino-heptulosonate 7-phosphate (DAHP) to dehydroquinate (DHQ). This Ruthia magnifica subsp. Calyptogena magnifica protein is 3-dehydroquinate synthase.